Consider the following 206-residue polypeptide: Thymidylate kinase (206 aa).

11 to 18 (GIDGAGKT) contributes to the ATP binding site.

The protein belongs to the thymidylate kinase family.

It catalyses the reaction dTMP + ATP = dTDP + ADP. Functionally, phosphorylation of dTMP to form dTDP in both de novo and salvage pathways of dTTP synthesis. The chain is Thymidylate kinase from Burkholderia vietnamiensis (strain G4 / LMG 22486) (Burkholderia cepacia (strain R1808)).